Consider the following 227-residue polypeptide: N-acetyltransferase 8 (227 aa).

Residues 1–42 (MAPCHIRKYQESDRQWVVGLLSRGMAEHAPATFRQLLKLPRT) are Cytoplasmic-facing. Residues 43-63 (LILLLGGPLALLLVSGSWLLA) form a helical; Signal-anchor for type II membrane protein membrane-spanning segment. In terms of domain architecture, N-acetyltransferase spans 61–220 (LLALVFSISL…HTVHFIYHLP (160 aa)). Residues 64 to 227 (LVFSISLFPA…HLPSSKVGSL (164 aa)) are Lumenal-facing.

It belongs to the NAT8 family. Preferentially expressed in liver and kidney. Also detected in brain (at protein level).

Its subcellular location is the endoplasmic reticulum-Golgi intermediate compartment membrane. The protein resides in the endoplasmic reticulum membrane. It carries out the reaction L-lysyl-[protein] + acetyl-CoA = N(6)-acetyl-L-lysyl-[protein] + CoA + H(+). The enzyme catalyses an S-substituted L-cysteine + acetyl-CoA = an N-acetyl-L-cysteine-S-conjugate + CoA + H(+). It functions in the pathway sulfur metabolism; glutathione metabolism. In terms of biological role, endoplasmic reticulum (ER)-membrane-bound lysine N-acetyltransferase catalyzing the N6-acetylation of lysine residues in the lumen of the ER in various proteins, including PROM1 and BACE1, using acetyl-CoA as acetyl donor. Thereby, may regulate apoptosis through the acetylation and the regulation of the expression of PROM1. May also regulate amyloid beta-peptide secretion through acetylation of BACE1 and the regulation of its expression in neurons. N(6)-lysine acetylation in the ER maintains protein homeostasis and regulates reticulophagy. Alternatively, acetylates the free alpha-amino group of cysteine S-conjugates to form mercapturic acids. This is the final step in a major route for detoxification of a wide variety of reactive electrophiles which starts with their incorporation into glutathione S-conjugates. The glutathione S-conjugates are then further processed into cysteine S-conjugates and finally mercapturic acids which are water soluble and can be readily excreted in urine or bile. The sequence is that of N-acetyltransferase 8 from Homo sapiens (Human).